A 117-amino-acid chain; its full sequence is Immunity protein BC_0921 (117 aa).

As to quaternary structure, probably interacts with cognate toxin BC_0920 but not with other non-cognate toxins. The interaction inhibits the toxic activity of BC_0920.

Its subcellular location is the cytoplasm. Functionally, immunity component of an LXG toxin-immunity module. Neutralizes the RNase activity of cognate toxin BC_0920. Probably does not have immunity protein activity on other toxins with the LXG domain. This Bacillus cereus (strain ATCC 14579 / DSM 31 / CCUG 7414 / JCM 2152 / NBRC 15305 / NCIMB 9373 / NCTC 2599 / NRRL B-3711) protein is Immunity protein BC_0921.